The primary structure comprises 75 residues: Protein Tlp homolog (75 aa).

This sequence belongs to the Tlp family.

This Clostridium acetobutylicum (strain ATCC 824 / DSM 792 / JCM 1419 / IAM 19013 / LMG 5710 / NBRC 13948 / NRRL B-527 / VKM B-1787 / 2291 / W) protein is Protein Tlp homolog.